Reading from the N-terminus, the 443-residue chain is Glutamate--tRNA ligase 1 (443 aa).

A 'HIGH' region motif is present at residues proline 9–asparagine 19. Residues lysine 238–arginine 242 carry the 'KMSKS' region motif. Residue lysine 241 coordinates ATP.

It belongs to the class-I aminoacyl-tRNA synthetase family. Glutamate--tRNA ligase type 1 subfamily. In terms of assembly, monomer.

It is found in the cytoplasm. The enzyme catalyses tRNA(Glu) + L-glutamate + ATP = L-glutamyl-tRNA(Glu) + AMP + diphosphate. Catalyzes the attachment of glutamate to tRNA(Glu) in a two-step reaction: glutamate is first activated by ATP to form Glu-AMP and then transferred to the acceptor end of tRNA(Glu). The sequence is that of Glutamate--tRNA ligase 1 from Ehrlichia ruminantium (strain Welgevonden).